The primary structure comprises 197 residues: GTP cyclohydrolase 1 (197 aa).

Residues C88, H91, and C160 each contribute to the Zn(2+) site.

The protein belongs to the GTP cyclohydrolase I family. In terms of assembly, homomer.

It carries out the reaction GTP + H2O = 7,8-dihydroneopterin 3'-triphosphate + formate + H(+). It participates in cofactor biosynthesis; 7,8-dihydroneopterin triphosphate biosynthesis; 7,8-dihydroneopterin triphosphate from GTP: step 1/1. The sequence is that of GTP cyclohydrolase 1 from Clostridium beijerinckii (strain ATCC 51743 / NCIMB 8052) (Clostridium acetobutylicum).